The chain runs to 357 residues: Protein ATP1B4 (357 aa).

Topologically, residues Met-1–Ser-110 are nuclear. The tract at residues Tyr-15–Asn-80 is disordered. Residues Glu-52–Gly-73 show a composition bias toward acidic residues. The chain crosses the membrane as a helical; Signal-anchor for type II membrane protein span at residues Leu-111–Met-131. Over Tyr-132–Thr-357 the chain is Perinuclear space.

It belongs to the X(+)/potassium ATPases subunit beta family. Associates with a SMAD7-transcriptional complex. Interacts with SNW1 and TOR1AIP1. According to PubMed:17592128, does not associate with known Na,K-ATPase alpha-subunits. Highly expressed in skeletal muscle and at a lower level in heart.

The protein resides in the nucleus inner membrane. May act as a transcriptional coregulator during muscle development through its interaction with SNW1. Has lost its ancestral function as a Na,K-ATPase beta-subunit. This Homo sapiens (Human) protein is Protein ATP1B4 (ATP1B4).